The primary structure comprises 580 residues: MAGGGSDLSTRGLNGGVSQVANEMNHLPAHSQSLQRLFTEDQDVDEGLVYDTVFKHFKRHKLEISNAIKKTFPFLEGLRDRELITNKMFEDSEDSCRNLVPVQRVVYNVLSELEKTFNLSVLEALFSEVNMQEYPDLIHIYKSFKNAIQDKLSFQESDRKEREERPDIKLSLKQGEVPESPEARKESDQACGKMDTVDIANNSTLGKPKRKRRKKKGHGWSRMGTRTQKNNQQNDNSKADGQLVSSEKKANMNLKDLSKIRGRKRGKPGTHFTQSDRAPQKRVRSRASRKHKDETVDFQAPLLPVTCGGVKGILHKEKLEQGTLAKCIQTEDGKWFTPMEFEIKGGYARSKNWRLSVRCGGWPLRRLMEEGSLPNPPRIYYRNKKRILKSQNNSSVDPCMRNLDECEVCRDGGELFCCDTCSRVFHEDCHIPPVESEKTPWNCIFCRMKESPGSQQCCQESEVLERQMCPEEQLKCEFLLLKVYCCSESSFFAKIPYYYYIREACQGLKEPMWLDKIKKRLNEHGYPQVEGFVQDMRLIFQNHRASYKYKDFGQMGLRLEAEFEKDFKEVFAIQETNGNS.

In terms of domain architecture, HSR spans 33–149 (SLQRLFTEDQ…IYKSFKNAIQ (117 aa)). Residues 155–293 (QESDRKEREE…RSRASRKHKD (139 aa)) are disordered. The segment covering 156-170 (ESDRKEREERPDIKL) has biased composition (basic and acidic residues). A Glycyl lysine isopeptide (Lys-Gly) (interchain with G-Cter in SUMO2) cross-link involves residue K169. The residue at position 180 (S180) is a Phosphoserine. A compositionally biased stretch (basic residues) spans 207-219 (KPKRKRRKKKGHG). The segment covering 224–236 (GTRTQKNNQQNDN) has biased composition (polar residues). Basic residues predominate over residues 280-290 (QKRVRSRASRK). K292 participates in a covalent cross-link: Glycyl lysine isopeptide (Lys-Gly) (interchain with G-Cter in SUMO2). The SAND domain maps to 293-374 (DETVDFQAPL…RRLMEEGSLP (82 aa)). The PHD-type zinc-finger motif lies at 403–449 (LDECEVCRDGGELFCCDTCSRVFHEDCHIPPVESEKTPWNCIFCRMK). The Bromo domain occupies 467–570 (QMCPEEQLKC…AEFEKDFKEV (104 aa)).

This Homo sapiens (Human) protein is Nuclear body protein SP140-like protein (SP140L).